The sequence spans 226 residues: N-acetylmuramic acid 6-phosphate phosphatase (226 aa).

Residue D12 is the Nucleophile of the active site. Residues D12, D14, and D171 each coordinate Mg(2+). D14 functions as the Proton donor in the catalytic mechanism.

It belongs to the HAD-like hydrolase superfamily. CbbY/CbbZ/Gph/YieH family. Phosphatase MupP subfamily. Mg(2+) serves as cofactor.

It carries out the reaction N-acetyl-D-muramate 6-phosphate + H2O = N-acetyl-D-muramate + phosphate. It participates in cell wall biogenesis; peptidoglycan recycling. Its function is as follows. Specifically catalyzes the dephosphorylation of N-acetylmuramate 6-phosphate (MurNAc-6P) to MurNac. Is involved in peptidoglycan recycling as part of a cell wall recycling pathway that bypasses de novo biosynthesis of the peptidoglycan precursor UDP-MurNAc. Plays a role in intrinsic resistance to fosfomycin, which targets the de novo synthesis of UDP-MurNAc. This Pseudomonas aeruginosa (strain ATCC 15692 / DSM 22644 / CIP 104116 / JCM 14847 / LMG 12228 / 1C / PRS 101 / PAO1) protein is N-acetylmuramic acid 6-phosphate phosphatase.